The primary structure comprises 878 residues: Alanine--tRNA ligase (878 aa).

Zn(2+)-binding residues include His571, His575, Cys673, and His677.

Belongs to the class-II aminoacyl-tRNA synthetase family. Zn(2+) serves as cofactor.

It localises to the cytoplasm. It catalyses the reaction tRNA(Ala) + L-alanine + ATP = L-alanyl-tRNA(Ala) + AMP + diphosphate. Functionally, catalyzes the attachment of alanine to tRNA(Ala) in a two-step reaction: alanine is first activated by ATP to form Ala-AMP and then transferred to the acceptor end of tRNA(Ala). Also edits incorrectly charged Ser-tRNA(Ala) and Gly-tRNA(Ala) via its editing domain. This chain is Alanine--tRNA ligase, found in Syntrophus aciditrophicus (strain SB).